We begin with the raw amino-acid sequence, 552 residues long: Glycosyltransferase family 92 protein RCOM_0530710 (552 aa).

A helical; Signal-anchor membrane pass occupies residues 12–34; that stretch reads WNRFFWCTLLLVLSCVLFTASTF. A GT92 domain is found at 277-520; sequence KPHEMCICTM…GTRAVEPPDW (244 aa).

This sequence belongs to the glycosyltransferase 92 family.

The protein resides in the membrane. The protein is Glycosyltransferase family 92 protein RCOM_0530710 of Ricinus communis (Castor bean).